Reading from the N-terminus, the 692-residue chain is DNA topoisomerase 4 subunit B (692 aa).

ATP contacts are provided by residues Tyr53, Asn93, Asp120, 162–168, and Lys393; that span reads GLHGVGI. Residues 473-587 enclose the Toprim domain; that stretch reads AELFIVEGDS…AGHLYLAVPP (115 aa). Positions 479, 552, and 554 each coordinate Mg(2+).

This sequence belongs to the type II topoisomerase family. ParE type 1 subfamily. As to quaternary structure, heterotetramer composed of ParC and ParE. Mg(2+) serves as cofactor. Mn(2+) is required as a cofactor. The cofactor is Ca(2+).

The enzyme catalyses ATP-dependent breakage, passage and rejoining of double-stranded DNA.. Functionally, topoisomerase IV is essential for chromosome segregation. It relaxes supercoiled DNA. Performs the decatenation events required during the replication of a circular DNA molecule. The sequence is that of DNA topoisomerase 4 subunit B from Bartonella bacilliformis (strain ATCC 35685 / KC583 / Herrer 020/F12,63).